The primary structure comprises 177 residues: Acireductone dioxygenase (177 aa).

Residues His-97, His-99, Glu-103, and His-141 each contribute to the Fe(2+) site. Positions 97, 99, 103, and 141 each coordinate Ni(2+).

Belongs to the acireductone dioxygenase (ARD) family. As to quaternary structure, monomer. The cofactor is Fe(2+). Ni(2+) is required as a cofactor.

The catalysed reaction is 1,2-dihydroxy-5-(methylsulfanyl)pent-1-en-3-one + O2 = 3-(methylsulfanyl)propanoate + CO + formate + 2 H(+). The enzyme catalyses 1,2-dihydroxy-5-(methylsulfanyl)pent-1-en-3-one + O2 = 4-methylsulfanyl-2-oxobutanoate + formate + 2 H(+). The protein operates within amino-acid biosynthesis; L-methionine biosynthesis via salvage pathway; L-methionine from S-methyl-5-thio-alpha-D-ribose 1-phosphate: step 5/6. Its function is as follows. Catalyzes 2 different reactions between oxygen and the acireductone 1,2-dihydroxy-3-keto-5-methylthiopentene (DHK-MTPene) depending upon the metal bound in the active site. Fe-containing acireductone dioxygenase (Fe-ARD) produces formate and 2-keto-4-methylthiobutyrate (KMTB), the alpha-ketoacid precursor of methionine in the methionine recycle pathway. Ni-containing acireductone dioxygenase (Ni-ARD) produces methylthiopropionate, carbon monoxide and formate, and does not lie on the methionine recycle pathway. This chain is Acireductone dioxygenase, found in Leptospira biflexa serovar Patoc (strain Patoc 1 / ATCC 23582 / Paris).